The primary structure comprises 70 residues: Small ribosomal subunit protein bS21 (70 aa).

The interval Glu-39–Tyr-70 is disordered. Residues Arg-45–Arg-61 show a composition bias toward basic residues.

Belongs to the bacterial ribosomal protein bS21 family.

This Ralstonia nicotianae (strain ATCC BAA-1114 / GMI1000) (Ralstonia solanacearum) protein is Small ribosomal subunit protein bS21.